A 177-amino-acid polypeptide reads, in one-letter code: Pyruvate synthase subunit PorC (177 aa).

As to quaternary structure, heterotetramer of one alpha, one beta, one delta and one gamma chain.

The catalysed reaction is 2 oxidized [2Fe-2S]-[ferredoxin] + pyruvate + CoA = 2 reduced [2Fe-2S]-[ferredoxin] + acetyl-CoA + CO2 + H(+). The chain is Pyruvate synthase subunit PorC (porC) from Methanothermobacter marburgensis (strain ATCC BAA-927 / DSM 2133 / JCM 14651 / NBRC 100331 / OCM 82 / Marburg) (Methanobacterium thermoautotrophicum).